Consider the following 219-residue polypeptide: Probable nicotinate-nucleotide adenylyltransferase (219 aa).

Belongs to the NadD family.

It carries out the reaction nicotinate beta-D-ribonucleotide + ATP + H(+) = deamido-NAD(+) + diphosphate. It participates in cofactor biosynthesis; NAD(+) biosynthesis; deamido-NAD(+) from nicotinate D-ribonucleotide: step 1/1. Its function is as follows. Catalyzes the reversible adenylation of nicotinate mononucleotide (NaMN) to nicotinic acid adenine dinucleotide (NaAD). The polypeptide is Probable nicotinate-nucleotide adenylyltransferase (Pseudomonas putida (strain GB-1)).